Here is a 420-residue protein sequence, read N- to C-terminus: 3-phosphoshikimate 1-carboxyvinyltransferase (420 aa).

Residues lysine 20, serine 21, and arginine 25 each coordinate 3-phosphoshikimate. Lysine 20 provides a ligand contact to phosphoenolpyruvate. Phosphoenolpyruvate is bound by residues glycine 90 and arginine 118. The 3-phosphoshikimate site is built by serine 159, serine 160, glutamine 161, serine 187, aspartate 303, and lysine 330. Glutamine 161 lines the phosphoenolpyruvate pocket. Aspartate 303 acts as the Proton acceptor in catalysis. Arginine 334, arginine 376, and lysine 402 together coordinate phosphoenolpyruvate.

It belongs to the EPSP synthase family. Monomer.

It localises to the cytoplasm. It carries out the reaction 3-phosphoshikimate + phosphoenolpyruvate = 5-O-(1-carboxyvinyl)-3-phosphoshikimate + phosphate. It functions in the pathway metabolic intermediate biosynthesis; chorismate biosynthesis; chorismate from D-erythrose 4-phosphate and phosphoenolpyruvate: step 6/7. In terms of biological role, catalyzes the transfer of the enolpyruvyl moiety of phosphoenolpyruvate (PEP) to the 5-hydroxyl of shikimate-3-phosphate (S3P) to produce enolpyruvyl shikimate-3-phosphate and inorganic phosphate. This is 3-phosphoshikimate 1-carboxyvinyltransferase from Brachyspira hyodysenteriae (strain ATCC 49526 / WA1).